We begin with the raw amino-acid sequence, 487 residues long: Cobyric acid synthase (487 aa).

Residues 248-435 (VLKVIVPVLP…LHGLFEGSQS (188 aa)) enclose the GATase cobBQ-type domain. Cys-329 acts as the Nucleophile in catalysis. Residue His-427 is part of the active site.

This sequence belongs to the CobB/CobQ family. CobQ subfamily.

Its pathway is cofactor biosynthesis; adenosylcobalamin biosynthesis. In terms of biological role, catalyzes amidations at positions B, D, E, and G on adenosylcobyrinic A,C-diamide. NH(2) groups are provided by glutamine, and one molecule of ATP is hydrogenolyzed for each amidation. This Pseudomonas entomophila (strain L48) protein is Cobyric acid synthase.